Reading from the N-terminus, the 343-residue chain is Dihydroorotate dehydrogenase (quinone) (343 aa).

FMN-binding positions include 61-65 and threonine 85; that span reads AGLDK. Residue lysine 65 coordinates substrate. 110–114 contacts substrate; it reads NRMGF. Positions 138 and 171 each coordinate FMN. Asparagine 171 lines the substrate pocket. Residue serine 174 is the Nucleophile of the active site. Asparagine 176 contributes to the substrate binding site. FMN-binding residues include lysine 216 and threonine 244. 245 to 246 is a substrate binding site; sequence NT. Residues glycine 267, glycine 296, and 317–318 each bind FMN; that span reads YS.

The protein belongs to the dihydroorotate dehydrogenase family. Type 2 subfamily. As to quaternary structure, monomer. FMN serves as cofactor.

It localises to the cell membrane. It catalyses the reaction (S)-dihydroorotate + a quinone = orotate + a quinol. Its pathway is pyrimidine metabolism; UMP biosynthesis via de novo pathway; orotate from (S)-dihydroorotate (quinone route): step 1/1. Catalyzes the conversion of dihydroorotate to orotate with quinone as electron acceptor. The chain is Dihydroorotate dehydrogenase (quinone) from Pseudomonas syringae pv. syringae (strain B728a).